The following is a 700-amino-acid chain: Stonustoxin subunit beta (700 aa).

Positions 2 to 264 are structural MACPF/CDC pore-forming domain; the sequence is PSDILVVAAL…EAPQLMADSS (263 aa). The segment at 265-384 is structural FAT domain; the sequence is TPILRKVRNT…DILTKAKPKV (120 aa). The interval 385–514 is thioredoxin (THX) domain; that stretch reads IFNQGVLFKG…PYMPGVESIK (130 aa). A B30.2/SPRY domain is found at 506–700; sequence YMPGVESIKD…QKVNGQIKLL (195 aa).

This sequence belongs to the SNTX/VTX toxin family. As to quaternary structure, heterodimer of alpha and beta subunits; non-covalently linked. Intrachain disulfide bonds may be present in the heterodimer. In terms of processing, not glycosylated. In terms of tissue distribution, expressed by the venom gland.

It localises to the secreted. Its function is as follows. This lethal (towards mammals) heterodimer induces hemolytic activities due to its ability to form pores in the cell membrane. The pore may be composed of 10 SNTX-alpha/beta heterodimers. The toxin elicits potent hypotension which is endothelium-dependent and appears to be mediated by the nitric oxide pathway and activation of potassium channels. In addition, it displays edema-inducing activities, increases vascular permeability. It also shows myotoxic activities and interferes irreversibly with neuromuscular function. It also induces irreversible platelet aggregation in rabbit or rat but not in human or mouse whole blood. In addition, it has been observed to increase spontaneous quantal acetylcholine release from isolated frog cutaneous pectoris motor endings. The chain is Stonustoxin subunit beta from Synanceia horrida (Estuarine stonefish).